A 269-amino-acid chain; its full sequence is Formamidopyrimidine-DNA glycosylase (269 aa).

The Schiff-base intermediate with DNA role is filled by proline 2. Glutamate 3 (proton donor) is an active-site residue. Lysine 58 functions as the Proton donor; for beta-elimination activity in the catalytic mechanism. The DNA site is built by histidine 91, arginine 110, and lysine 150. Residues 235–269 form an FPG-type zinc finger; that stretch reads SVYGCKNKKCYRCKGIIIKFVQNQRSTFYCKKCQT. The Proton donor; for delta-elimination activity role is filled by arginine 259.

It belongs to the FPG family. Monomer. Requires Zn(2+) as cofactor.

It catalyses the reaction Hydrolysis of DNA containing ring-opened 7-methylguanine residues, releasing 2,6-diamino-4-hydroxy-5-(N-methyl)formamidopyrimidine.. The enzyme catalyses 2'-deoxyribonucleotide-(2'-deoxyribose 5'-phosphate)-2'-deoxyribonucleotide-DNA = a 3'-end 2'-deoxyribonucleotide-(2,3-dehydro-2,3-deoxyribose 5'-phosphate)-DNA + a 5'-end 5'-phospho-2'-deoxyribonucleoside-DNA + H(+). Involved in base excision repair of DNA damaged by oxidation or by mutagenic agents. Acts as a DNA glycosylase that recognizes and removes damaged bases. Has a preference for oxidized purines, such as 7,8-dihydro-8-oxoguanine (8-oxoG). Has AP (apurinic/apyrimidinic) lyase activity and introduces nicks in the DNA strand. Cleaves the DNA backbone by beta-delta elimination to generate a single-strand break at the site of the removed base with both 3'- and 5'-phosphates. This Vesicomyosocius okutanii subsp. Calyptogena okutanii (strain HA) protein is Formamidopyrimidine-DNA glycosylase.